A 235-amino-acid polypeptide reads, in one-letter code: uncharacterized protein (235 aa).

One can recognise an ABC transporter domain in the interval 2-235 (IKLKNVTKTY…EEKLRGFDDR (234 aa)). Residue 38–45 (GPSGSGKS) participates in ATP binding.

The protein belongs to the ABC transporter superfamily.

This is an uncharacterized protein from Methanocaldococcus jannaschii (strain ATCC 43067 / DSM 2661 / JAL-1 / JCM 10045 / NBRC 100440) (Methanococcus jannaschii).